A 307-amino-acid chain; its full sequence is Peroxisomal membrane protein PMP34 (307 aa).

Over 1-9 (MASVLSYES) the chain is Cytoplasmic. The interval 1–147 (MASVLSYESL…NEDIIPTNYK (147 aa)) is necessary for targeting to peroxisomes and interaction with PEX19. Solcar repeat units follow at residues 7–92 (YESL…LKAV), 99–192 (SSTG…LKRQ), and 200–294 (LSSL…LTAA). The helical transmembrane segment at 10-30 (LVHAVAGAVGSVTAMTVFFPL) threads the bilayer. The Lumenal segment spans residues 31-66 (DTARLRLQVDEKRKSKTTHAVLLEIIKEEGLLAPYR). A helical membrane pass occupies residues 67–87 (GWFPVISSLCCSNFVYFYTFN). Residues 88–104 (SLKAVWVKGQRSSTGKD) are Cytoplasmic-facing. Residues 105–125 (LVVGFVAGVVNVLLTTPLWVV) form a helical membrane-spanning segment. The Lumenal segment spans residues 126–160 (NTRLKLQGAKFRNEDIIPTNYKGIIDAFHQIIRDE). Residues 161–181 (GILALWNGTFPSLLLVFNPAI) traverse the membrane as a helical segment. Topologically, residues 182–202 (QFMFYEGLKRQLLKKRMKLSS) are cytoplasmic. The Peroxisome localization signal motif lies at 190-199 (KRQLLKKRMK). The chain crosses the membrane as a helical span at residues 203–223 (LDVFIIGAIAKAIATTVTYPM). Residues 224 to 280 (QTVQSILRFGRHRLNPENRTLGSLRNVLSLLHQRVKRFGIMGLYKGLEAKLLQTVLT) are Lumenal-facing. The segment at 244–307 (LGSLRNVLSL…VMGLKSTHKH (64 aa)) is necessary for targeting to peroxisomes and interaction with PEX19. The helical transmembrane segment at 281–301 (AALMFLVYEKLTAATFTVMGL) threads the bilayer. Residues 302–307 (KSTHKH) lie on the Cytoplasmic side of the membrane.

Belongs to the mitochondrial carrier (TC 2.A.29) family. As to quaternary structure, interacts (via N- and C-terminus peroxisomal targeting regions) with PEX19; the interaction occurs with the newly synthesized SLC25A17 in the cytosol. As to expression, expressed in liver, kidney, heart, spleen, muscle and lung.

It localises to the cytoplasm. The protein resides in the peroxisome membrane. The catalysed reaction is AMP(out) + CoA(in) = AMP(in) + CoA(out). It catalyses the reaction 3'-dephospho-CoA(in) + AMP(out) = 3'-dephospho-CoA(out) + AMP(in). The enzyme catalyses acetyl-CoA(in) + AMP(out) = acetyl-CoA(out) + AMP(in). It carries out the reaction AMP(in) + NAD(+)(out) = AMP(out) + NAD(+)(in). The catalysed reaction is FAD(in) + AMP(out) = FAD(out) + AMP(in). It catalyses the reaction FMN(in) + AMP(out) = FMN(out) + AMP(in). The enzyme catalyses AMP(in) + ADP(out) = AMP(out) + ADP(in). It carries out the reaction adenosine 3',5'-bisphosphate(in) + AMP(out) = adenosine 3',5'-bisphosphate(out) + AMP(in). The catalysed reaction is FAD(in) + CoA(out) = FAD(out) + CoA(in). It catalyses the reaction FAD(in) + adenosine 3',5'-bisphosphate(out) = FAD(out) + adenosine 3',5'-bisphosphate(in). The enzyme catalyses FMN(in) + CoA(out) = FMN(out) + CoA(in). It carries out the reaction FMN(in) + adenosine 3',5'-bisphosphate(out) = FMN(out) + adenosine 3',5'-bisphosphate(in). The catalysed reaction is FAD(out) + NAD(+)(in) = FAD(in) + NAD(+)(out). It catalyses the reaction FMN(out) + NAD(+)(in) = FMN(in) + NAD(+)(out). The enzyme catalyses NAD(+)(in) + CoA(out) = NAD(+)(out) + CoA(in). It carries out the reaction adenosine 3',5'-bisphosphate(out) + NAD(+)(in) = adenosine 3',5'-bisphosphate(in) + NAD(+)(out). The catalysed reaction is FMN(out) + ADP(in) = FMN(in) + ADP(out). It catalyses the reaction FAD(out) + ADP(in) = FAD(in) + ADP(out). The enzyme catalyses ADP(out) + CoA(in) = ADP(in) + CoA(out). It carries out the reaction adenosine 3',5'-bisphosphate(in) + ADP(out) = adenosine 3',5'-bisphosphate(out) + ADP(in). Peroxisomal transporter for multiple cofactors like coenzyme A (CoA), flavin adenine dinucleotide (FAD), flavin mononucleotide (FMN) and nucleotide adenosine monophosphate (AMP), and to a lesser extent for nicotinamide adenine dinucleotide (NAD(+)), adenosine diphosphate (ADP) and adenosine 3',5'-diphosphate (PAP). May catalyze the transport of free CoA, FAD and NAD(+) from the cytosol into the peroxisomal matrix by a counter-exchange mechanism. This Mus musculus (Mouse) protein is Peroxisomal membrane protein PMP34 (Slc25a17).